Reading from the N-terminus, the 784-residue chain is E3 UFM1-protein ligase 1 homolog (784 aa).

Positions 401-481 (QKGNSSAQDL…GGGGGGNKKT (81 aa)) are disordered.

The protein belongs to the UFL1 family.

Its function is as follows. E3 UFM1-protein ligase that mediates ufmylation of target proteins. The sequence is that of E3 UFM1-protein ligase 1 homolog from Drosophila ananassae (Fruit fly).